The primary structure comprises 82 residues: Exodeoxyribonuclease 7 small subunit (82 aa).

Belongs to the XseB family. In terms of assembly, heterooligomer composed of large and small subunits.

The protein resides in the cytoplasm. It carries out the reaction Exonucleolytic cleavage in either 5'- to 3'- or 3'- to 5'-direction to yield nucleoside 5'-phosphates.. In terms of biological role, bidirectionally degrades single-stranded DNA into large acid-insoluble oligonucleotides, which are then degraded further into small acid-soluble oligonucleotides. In Mycobacterium marinum (strain ATCC BAA-535 / M), this protein is Exodeoxyribonuclease 7 small subunit.